The primary structure comprises 341 residues: Protein-glutamate methylesterase/protein-glutamine glutaminase 1 (341 aa).

In terms of domain architecture, Response regulatory spans 2-119 (KVGIVNDSAL…SDAKLTAGPL (118 aa)). At Asp-53 the chain carries 4-aspartylphosphate. Residues 146 to 331 (TLAASRLVAI…LTAIAPRLVQ (186 aa)) enclose the CheB-type methylesterase domain. Residues Ser-158, His-185, and Asp-278 contribute to the active site.

This sequence belongs to the CheB family. In terms of processing, phosphorylated by CheA. Phosphorylation of the N-terminal regulatory domain activates the methylesterase activity.

Its subcellular location is the cytoplasm. The catalysed reaction is [protein]-L-glutamate 5-O-methyl ester + H2O = L-glutamyl-[protein] + methanol + H(+). It carries out the reaction L-glutaminyl-[protein] + H2O = L-glutamyl-[protein] + NH4(+). Functionally, involved in chemotaxis. Part of a chemotaxis signal transduction system that modulates chemotaxis in response to various stimuli. Catalyzes the demethylation of specific methylglutamate residues introduced into the chemoreceptors (methyl-accepting chemotaxis proteins or MCP) by CheR. Also mediates the irreversible deamidation of specific glutamine residues to glutamic acid. The sequence is that of Protein-glutamate methylesterase/protein-glutamine glutaminase 1 from Cupriavidus pinatubonensis (strain JMP 134 / LMG 1197) (Cupriavidus necator (strain JMP 134)).